The chain runs to 141 residues: SsrA-binding protein (141 aa).

It belongs to the SmpB family.

The protein resides in the cytoplasm. Required for rescue of stalled ribosomes mediated by trans-translation. Binds to transfer-messenger RNA (tmRNA), required for stable association of tmRNA with ribosomes. tmRNA and SmpB together mimic tRNA shape, replacing the anticodon stem-loop with SmpB. tmRNA is encoded by the ssrA gene; the 2 termini fold to resemble tRNA(Ala) and it encodes a 'tag peptide', a short internal open reading frame. During trans-translation Ala-aminoacylated tmRNA acts like a tRNA, entering the A-site of stalled ribosomes, displacing the stalled mRNA. The ribosome then switches to translate the ORF on the tmRNA; the nascent peptide is terminated with the 'tag peptide' encoded by the tmRNA and targeted for degradation. The ribosome is freed to recommence translation, which seems to be the essential function of trans-translation. The polypeptide is SsrA-binding protein (Ureaplasma parvum serovar 3 (strain ATCC 27815 / 27 / NCTC 11736)).